The sequence spans 644 residues: DNA mismatch repair protein MutL (644 aa).

Residues 363-405 (GTFNPFTDDKTNQHYTKAGSGSGSGYSSGSSSSSGSGSGSSYS) form a disordered region. Low complexity predominate over residues 389-405 (SSGSSSSSGSGSGSSYS).

The protein belongs to the DNA mismatch repair MutL/HexB family.

Its function is as follows. This protein is involved in the repair of mismatches in DNA. It is required for dam-dependent methyl-directed DNA mismatch repair. May act as a 'molecular matchmaker', a protein that promotes the formation of a stable complex between two or more DNA-binding proteins in an ATP-dependent manner without itself being part of a final effector complex. This chain is DNA mismatch repair protein MutL, found in Flavobacterium johnsoniae (strain ATCC 17061 / DSM 2064 / JCM 8514 / BCRC 14874 / CCUG 350202 / NBRC 14942 / NCIMB 11054 / UW101) (Cytophaga johnsonae).